Consider the following 191-residue polypeptide: Protein GrpE (191 aa).

The interval 1 to 49 is disordered; it reads MSEEKQTAEQVEAAEQEEVTEQAEQAASQEQHEETAGQEEALQHQIDEL. The segment covering 12–21 has biased composition (acidic residues); that stretch reads EAAEQEEVTE. The span at 30 to 49 shows a compositional bias: basic and acidic residues; sequence EQHEETAGQEEALQHQIDEL.

The protein belongs to the GrpE family. Homodimer.

It localises to the cytoplasm. Its function is as follows. Participates actively in the response to hyperosmotic and heat shock by preventing the aggregation of stress-denatured proteins, in association with DnaK and GrpE. It is the nucleotide exchange factor for DnaK and may function as a thermosensor. Unfolded proteins bind initially to DnaJ; upon interaction with the DnaJ-bound protein, DnaK hydrolyzes its bound ATP, resulting in the formation of a stable complex. GrpE releases ADP from DnaK; ATP binding to DnaK triggers the release of the substrate protein, thus completing the reaction cycle. Several rounds of ATP-dependent interactions between DnaJ, DnaK and GrpE are required for fully efficient folding. This chain is Protein GrpE, found in Bacillus velezensis (strain DSM 23117 / BGSC 10A6 / LMG 26770 / FZB42) (Bacillus amyloliquefaciens subsp. plantarum).